Here is a 480-residue protein sequence, read N- to C-terminus: O-acyltransferase ausP (480 aa).

Active-site proton acceptor residues include histidine 180 and aspartate 412.

It belongs to the plant acyltransferase family. Monomer.

It participates in secondary metabolite biosynthesis; terpenoid biosynthesis. Its function is as follows. O-acyltransferase; part of the gene cluster that mediates the biosynthesis of calidodehydroaustin, a fungal meroterpenoid. The first step of the pathway is the synthesis of 3,5-dimethylorsellinic acid by the polyketide synthase ausA. 3,5-dimethylorsellinic acid is then prenylated by the polyprenyl transferase ausN. Further epoxidation by the FAD-dependent monooxygenase ausM and cyclization by the probable terpene cyclase ausL lead to the formation of protoaustinoid A. Protoaustinoid A is then oxidized to spiro-lactone preaustinoid A3 by the combined action of the FAD-binding monooxygenases ausB and ausC, and the dioxygenase ausE. Acid-catalyzed keto-rearrangement and ring contraction of the tetraketide portion of preaustinoid A3 by ausJ lead to the formation of preaustinoid A4. The aldo-keto reductase ausK, with the help of ausH, is involved in the next step by transforming preaustinoid A4 into isoaustinone which is in turn hydroxylated by the P450 monooxygenase ausI to form austinolide. The cytochrome P450 monooxygenase ausG modifies austinolide to austinol. Austinol is further acetylated to austin by the O-acetyltransferase ausP, which spontaneously changes to dehydroaustin. The cytochrome P450 monooxygenase ausR then converts dehydroaustin is into 7-dehydrodehydroaustin. The hydroxylation catalyzed by ausR permits the O-acetyltransferase ausQ to add an additional acetyl group to the molecule, leading to the formation of acetoxydehydroaustin. The short chain dehydrogenase ausT catalyzes the reduction of the double bond present between carbon atoms 1 and 2 to convert 7-dehydrodehydroaustin into 1,2-dihydro-7-hydroxydehydroaustin. AusQ catalyzes not only an acetylation reaction but also the addition of the PKS ausV diketide product to 1,2-dihydro-7-hydroxydehydroaustin, forming precalidodehydroaustin. Finally, the iron/alpha-ketoglutarate-dependent dioxygenase converts precalidodehydroaustin into calidodehydroaustin. This is O-acyltransferase ausP from Aspergillus calidoustus.